Reading from the N-terminus, the 639-residue chain is Probable serine/threonine-protein kinase DDB_G0282777 (639 aa).

A coiled-coil region spans residues 7-122 (LKENKESLKD…EDLKSIILTS (116 aa)). The region spanning 233-588 (MHMVGDIKKG…SNNNQNHTNI (356 aa)) is the Protein kinase domain. ATP is bound by residues 239–247 (IKKGSISSD) and Lys284. Catalysis depends on Asp439, which acts as the Proton acceptor. A disordered region spans residues 601–639 (NTLETSTTNPNTNTTTSDTNTSTTSTTNTNTTTSNTITA).

Belongs to the protein kinase superfamily. Ser/Thr protein kinase family.

It catalyses the reaction L-seryl-[protein] + ATP = O-phospho-L-seryl-[protein] + ADP + H(+). The catalysed reaction is L-threonyl-[protein] + ATP = O-phospho-L-threonyl-[protein] + ADP + H(+). This Dictyostelium discoideum (Social amoeba) protein is Probable serine/threonine-protein kinase DDB_G0282777.